The following is a 239-amino-acid chain: Phosphoribosylaminoimidazole-succinocarboxamide synthase (239 aa).

This sequence belongs to the SAICAR synthetase family.

The catalysed reaction is 5-amino-1-(5-phospho-D-ribosyl)imidazole-4-carboxylate + L-aspartate + ATP = (2S)-2-[5-amino-1-(5-phospho-beta-D-ribosyl)imidazole-4-carboxamido]succinate + ADP + phosphate + 2 H(+). The protein operates within purine metabolism; IMP biosynthesis via de novo pathway; 5-amino-1-(5-phospho-D-ribosyl)imidazole-4-carboxamide from 5-amino-1-(5-phospho-D-ribosyl)imidazole-4-carboxylate: step 1/2. The protein is Phosphoribosylaminoimidazole-succinocarboxamide synthase of Bacillus cereus (strain B4264).